The primary structure comprises 511 residues: Bifunctional purine biosynthesis protein PurH (511 aa).

The MGS-like domain occupies 1–145 (MKKRALVSVS…KNHKFVSVIV (145 aa)).

The protein belongs to the PurH family.

The enzyme catalyses (6R)-10-formyltetrahydrofolate + 5-amino-1-(5-phospho-beta-D-ribosyl)imidazole-4-carboxamide = 5-formamido-1-(5-phospho-D-ribosyl)imidazole-4-carboxamide + (6S)-5,6,7,8-tetrahydrofolate. It catalyses the reaction IMP + H2O = 5-formamido-1-(5-phospho-D-ribosyl)imidazole-4-carboxamide. The protein operates within purine metabolism; IMP biosynthesis via de novo pathway; 5-formamido-1-(5-phospho-D-ribosyl)imidazole-4-carboxamide from 5-amino-1-(5-phospho-D-ribosyl)imidazole-4-carboxamide (10-formyl THF route): step 1/1. Its pathway is purine metabolism; IMP biosynthesis via de novo pathway; IMP from 5-formamido-1-(5-phospho-D-ribosyl)imidazole-4-carboxamide: step 1/1. This is Bifunctional purine biosynthesis protein PurH from Bacillus cytotoxicus (strain DSM 22905 / CIP 110041 / 391-98 / NVH 391-98).